Consider the following 501-residue polypeptide: Probable cytochrome P450 508A4 (501 aa).

A helical transmembrane segment spans residues 1–21 (MIMLIKVFVLLLVVYILHNSY). Cys445 provides a ligand contact to heme.

It belongs to the cytochrome P450 family. It depends on heme as a cofactor.

Its subcellular location is the membrane. This Dictyostelium discoideum (Social amoeba) protein is Probable cytochrome P450 508A4 (cyp508A4).